We begin with the raw amino-acid sequence, 422 residues long: Trichothecene biosynthesis transcription regulator TRI10 (422 aa).

Belongs to the TRI10 transcription regulator family.

The protein localises to the nucleus. In terms of biological role, transcriptional activator of all of the trichothecene biosynthesis genes. Acts upstream of the cluster-encoded transcription factor TRI6 and is necessary for full expression of both the other trichothecene genes and the genes for the primary metabolic pathway that precedes the trichothecene biosynthetic pathway. The chain is Trichothecene biosynthesis transcription regulator TRI10 from Trichoderma arundinaceum.